Consider the following 376-residue polypeptide: Queuine tRNA-ribosyltransferase (376 aa).

Aspartate 93 functions as the Proton acceptor in the catalytic mechanism. Residues aspartate 93–phenylalanine 97, aspartate 147, glutamine 190, and glycine 217 each bind substrate. The tract at residues glycine 248–aspartate 254 is RNA binding. The Nucleophile role is filled by aspartate 267. Cysteine 305, cysteine 307, cysteine 310, and histidine 336 together coordinate Zn(2+).

It belongs to the queuine tRNA-ribosyltransferase family. As to quaternary structure, homodimer. Within each dimer, one monomer is responsible for RNA recognition and catalysis, while the other monomer binds to the replacement base PreQ1. Requires Zn(2+) as cofactor.

The enzyme catalyses 7-aminomethyl-7-carbaguanine + guanosine(34) in tRNA = 7-aminomethyl-7-carbaguanosine(34) in tRNA + guanine. Its pathway is tRNA modification; tRNA-queuosine biosynthesis. In terms of biological role, catalyzes the base-exchange of a guanine (G) residue with the queuine precursor 7-aminomethyl-7-deazaguanine (PreQ1) at position 34 (anticodon wobble position) in tRNAs with GU(N) anticodons (tRNA-Asp, -Asn, -His and -Tyr). Catalysis occurs through a double-displacement mechanism. The nucleophile active site attacks the C1' of nucleotide 34 to detach the guanine base from the RNA, forming a covalent enzyme-RNA intermediate. The proton acceptor active site deprotonates the incoming PreQ1, allowing a nucleophilic attack on the C1' of the ribose to form the product. After dissociation, two additional enzymatic reactions on the tRNA convert PreQ1 to queuine (Q), resulting in the hypermodified nucleoside queuosine (7-(((4,5-cis-dihydroxy-2-cyclopenten-1-yl)amino)methyl)-7-deazaguanosine). The sequence is that of Queuine tRNA-ribosyltransferase from Dinoroseobacter shibae (strain DSM 16493 / NCIMB 14021 / DFL 12).